The sequence spans 167 residues: MTERVCVGAIAGAFGVRGEVRLKSFTSQPNDIAGYSPLYTEDGNRSFTIRLTRPVTGGLGARLSGVETREQAEALKGVTLWADRDKLPALPDDEFYHADLIGLSVYDTGGALLGKVRAIYDHGAGDILEIFGPGRRQVLLLPFTRAFVPTVDLAAGRIVADPPEEQE.

The 75-residue stretch at 92-166 folds into the PRC barrel domain; the sequence is DDEFYHADLI…RIVADPPEEQ (75 aa).

Belongs to the RimM family. Binds ribosomal protein uS19.

The protein resides in the cytoplasm. Its function is as follows. An accessory protein needed during the final step in the assembly of 30S ribosomal subunit, possibly for assembly of the head region. Essential for efficient processing of 16S rRNA. May be needed both before and after RbfA during the maturation of 16S rRNA. It has affinity for free ribosomal 30S subunits but not for 70S ribosomes. In Paracoccus denitrificans (strain Pd 1222), this protein is Ribosome maturation factor RimM.